The following is a 510-amino-acid chain: NAD(P)H-quinone oxidoreductase subunit 2, chloroplastic (510 aa).

The next 12 membrane-spanning stretches (helical) occupy residues 24–44 (LLLF…GLIL), 59–79 (WFYF…LFRW), 99–119 (IFQF…VEYI), 124–144 (MAIT…MFLC), 149–169 (FITI…LSGY), 183–203 (YLLM…WLYG), 229–249 (ISIA…PAPF), 295–315 (WHLL…LIAI), 323–343 (MLAY…IVGD), 347–367 (GYAS…GTFA), 395–415 (ALSL…AGFF), and 418–438 (LHLF…IGLL).

It belongs to the complex I subunit 2 family. As to quaternary structure, NDH is composed of at least 16 different subunits, 5 of which are encoded in the nucleus.

It is found in the plastid. Its subcellular location is the chloroplast thylakoid membrane. It catalyses the reaction a plastoquinone + NADH + (n+1) H(+)(in) = a plastoquinol + NAD(+) + n H(+)(out). It carries out the reaction a plastoquinone + NADPH + (n+1) H(+)(in) = a plastoquinol + NADP(+) + n H(+)(out). In terms of biological role, NDH shuttles electrons from NAD(P)H:plastoquinone, via FMN and iron-sulfur (Fe-S) centers, to quinones in the photosynthetic chain and possibly in a chloroplast respiratory chain. The immediate electron acceptor for the enzyme in this species is believed to be plastoquinone. Couples the redox reaction to proton translocation, and thus conserves the redox energy in a proton gradient. The polypeptide is NAD(P)H-quinone oxidoreductase subunit 2, chloroplastic (Phormium tenax (New Zealand flax)).